The chain runs to 218 residues: Protein U63 (218 aa).

Belongs to the herpesviridae UL92 family.

This is Protein U63 (U63) from Homo sapiens (Human).